We begin with the raw amino-acid sequence, 479 residues long: 3-isopropylmalate dehydratase large subunit (479 aa).

Positions 350, 415, and 418 each coordinate [4Fe-4S] cluster.

Belongs to the aconitase/IPM isomerase family. LeuC type 1 subfamily. In terms of assembly, heterodimer of LeuC and LeuD. It depends on [4Fe-4S] cluster as a cofactor.

It catalyses the reaction (2R,3S)-3-isopropylmalate = (2S)-2-isopropylmalate. Its pathway is amino-acid biosynthesis; L-leucine biosynthesis; L-leucine from 3-methyl-2-oxobutanoate: step 2/4. In terms of biological role, catalyzes the isomerization between 2-isopropylmalate and 3-isopropylmalate, via the formation of 2-isopropylmaleate. This Caulobacter vibrioides (strain ATCC 19089 / CIP 103742 / CB 15) (Caulobacter crescentus) protein is 3-isopropylmalate dehydratase large subunit.